Here is a 265-residue protein sequence, read N- to C-terminus: Flavin-dependent thymidylate synthase (265 aa).

The region spanning 11–224 is the ThyX domain; it reads GFLKLIDFMG…PIAFNSFENH (214 aa). FAD-binding positions include Ser56, 79-81, and Glu87; that span reads RHR. 76 to 79 is a dUMP binding site; it reads QWMR. The ThyX motif motif lies at 79 to 89; that stretch reads RHRTARINEVS. Arg155 is a binding site for dUMP. Residues 171 to 173 and His177 contribute to the FAD site; that span reads DLN. Arg182 is a dUMP binding site. Catalysis depends on Arg182, which acts as the Involved in ionization of N3 of dUMP, leading to its activation.

The protein belongs to the thymidylate synthase ThyX family. Homotetramer. It depends on FAD as a cofactor.

The enzyme catalyses dUMP + (6R)-5,10-methylene-5,6,7,8-tetrahydrofolate + NADPH + H(+) = dTMP + (6S)-5,6,7,8-tetrahydrofolate + NADP(+). It participates in pyrimidine metabolism; dTTP biosynthesis. In terms of biological role, catalyzes the reductive methylation of 2'-deoxyuridine-5'-monophosphate (dUMP) to 2'-deoxythymidine-5'-monophosphate (dTMP) while utilizing 5,10-methylenetetrahydrofolate (mTHF) as the methyl donor, and NADPH and FADH(2) as the reductant. In Borreliella burgdorferi (strain ATCC 35210 / DSM 4680 / CIP 102532 / B31) (Borrelia burgdorferi), this protein is Flavin-dependent thymidylate synthase.